The primary structure comprises 554 residues: Hyaluronan synthase 3 (554 aa).

The Cytoplasmic portion of the chain corresponds to M1–S15. The helical transmembrane segment at L16–I36 threads the bilayer. Residues H37–S44 lie on the Extracellular side of the membrane. The chain crosses the membrane as a helical span at residues F45–L65. The Cytoplasmic segment spans residues E66–L378. The helical transmembrane segment at W379–I399 threads the bilayer. Over Q400–N409 the chain is Extracellular. Residues I410–F430 traverse the membrane as a helical segment. Residues L431–S441 are Cytoplasmic-facing. Residues L442 to I462 traverse the membrane as a helical segment. A glycan (N-linked (GlcNAc...) asparagine) is linked at N463. The Extracellular portion of the chain corresponds to N463–T474. The chain crosses the membrane as a helical span at residues I475 to G495. Residues L496–S516 lie on the Cytoplasmic side of the membrane. The chain crosses the membrane as a helical span at residues G517 to A537. The Extracellular portion of the chain corresponds to R538–V554.

The protein belongs to the NodC/HAS family. It depends on Mg(2+) as a cofactor. In terms of processing, O-GlcNAcylation increases the hyaluronan synthase activity, HAS3 stability and its plasma membrane residence. The concentration of UDP-GlcNAc controls the level of O-GlcNAc modification.

The protein localises to the cell membrane. Its subcellular location is the golgi apparatus membrane. It localises to the golgi apparatus. It is found in the trans-Golgi network membrane. The protein resides in the cytoplasmic vesicle. It carries out the reaction [hyaluronan](n) + UDP-N-acetyl-alpha-D-glucosamine = N-acetyl-beta-D-glucosaminyl-(1-&gt;4)-[hyaluronan](n) + UDP + H(+). The catalysed reaction is N-acetyl-beta-D-glucosaminyl-(1-&gt;4)-[hyaluronan](n) + UDP-alpha-D-glucuronate = [hyaluronan](n+1) + UDP + H(+). It participates in glycan biosynthesis; hyaluronan biosynthesis. Catalyzes the addition of GlcNAc or GlcUA monosaccharides to the nascent hyaluronan polymer. Therefore, it is essential to hyaluronan synthesis a major component of most extracellular matrices that has a structural role in tissues architectures and regulates cell adhesion, migration and differentiation. This is one of three isoenzymes responsible for cellular hyaluronan synthesis. In Mus musculus (Mouse), this protein is Hyaluronan synthase 3 (Has3).